We begin with the raw amino-acid sequence, 96 residues long: Salivary protein FS50 (96 aa).

Residues 1 to 19 form the signal peptide; the sequence is MKWILVLALVCLAVEYSYS. Disulfide bonds link C26–C71, C50–C78, C63–C91, and C67–C93.

It is found in the secreted. Functionally, salivary protein that inhibits host voltage-gated sodium channel Nav1.5/SCN5A. This is Salivary protein FS50 from Xenopsylla cheopis (Oriental rat flea).